The primary structure comprises 189 residues: Thymidine kinase (189 aa).

ATP is bound by residues Gly9 to Thr16 and Asp85 to Gln88. Glu86 functions as the Proton acceptor in the catalytic mechanism. The Zn(2+) site is built by Cys143, Cys146, Cys180, and His183.

The protein belongs to the thymidine kinase family. As to quaternary structure, homotetramer.

The protein resides in the cytoplasm. The enzyme catalyses thymidine + ATP = dTMP + ADP + H(+). This Streptococcus pyogenes serotype M1 protein is Thymidine kinase.